The chain runs to 244 residues: Tyrosine recombinase XerD-like (244 aa).

The region spanning 1–73 (MRDRISAFLE…ACNQFLYFLY (73 aa)) is the Core-binding (CB) domain. The 155-residue stretch at 90-244 (AEKKTEKPEI…KTVLTLEKYR (155 aa)) folds into the Tyr recombinase domain. Active-site residues include K150 and R211. Y243 acts as the O-(3'-phospho-DNA)-tyrosine intermediate in catalysis.

It belongs to the 'phage' integrase family. XerD-like subfamily.

The protein localises to the cytoplasm. Putative tyrosine recombinase. Not involved in the cutting and rejoining of the recombining DNA molecules on dif(SL) site. This Streptococcus pneumoniae (strain CGSP14) protein is Tyrosine recombinase XerD-like.